The following is a 461-amino-acid chain: MALSIYNTLTKTKDVFQPLVGNQVRMYVCGMTVYDFCHIGHARVMVAFDVVTRWLRQRGYDVTYVRNITDIDDKIIKRANENGEPFEALVERMIAAMHEDEARLSVLRPDIEPRATGHIAGMHQMIQTLIDKGYAYAPGNGDVYYRVTRFETYGKLSRRKIDELKIGARIEVDEIKEDPLDFVLWKGAKPGEPSWDSPWGKGRPGWHIECSVMSTCCLGETFDIHGGGPDLVFPHHENEIAQSEAATGKQYANAWMHAGAVRVDGEKMSKSLGNFFTIREVLEKYHPEVVRYLLVSSHYRSPINYSEESLKEAKGALERFYNGLKGLPEAAPAGGEAYVERFGVAMDDDFNSPEACAVLFEMIREVNRLRESDVQAAAGLAAQLKQLASVLGVLQLEPEAFLQAGAAGKVDAAEVEALIAARLQARADKNWAESDRIRDQLTAMGVVLEDGKGGTTWRLAE.

Cys29 provides a ligand contact to Zn(2+). A 'HIGH' region motif is present at residues 31–41 (MTVYDFCHIGH). The Zn(2+) site is built by Cys210, His235, and Glu239. A 'KMSKS' region motif is present at residues 267–271 (KMSKS). An ATP-binding site is contributed by Lys270.

It belongs to the class-I aminoacyl-tRNA synthetase family. As to quaternary structure, monomer. It depends on Zn(2+) as a cofactor.

Its subcellular location is the cytoplasm. It catalyses the reaction tRNA(Cys) + L-cysteine + ATP = L-cysteinyl-tRNA(Cys) + AMP + diphosphate. This is Cysteine--tRNA ligase from Ectopseudomonas mendocina (strain ymp) (Pseudomonas mendocina).